We begin with the raw amino-acid sequence, 861 residues long: Leucine--tRNA ligase (861 aa).

Residues 42–52 (PYPSGRIHMGH) carry the 'HIGH' region motif. The short motif at 623–627 (KMSKS) is the 'KMSKS' region element. Lysine 626 serves as a coordination point for ATP.

Belongs to the class-I aminoacyl-tRNA synthetase family.

It is found in the cytoplasm. The catalysed reaction is tRNA(Leu) + L-leucine + ATP = L-leucyl-tRNA(Leu) + AMP + diphosphate. This is Leucine--tRNA ligase from Caulobacter vibrioides (strain ATCC 19089 / CIP 103742 / CB 15) (Caulobacter crescentus).